Reading from the N-terminus, the 554-residue chain is Perforin-1 (554 aa).

The signal sequence occupies residues 1-20 (MATCLFLLGLFLLLPRPVPA). Disulfide bonds link Cys22–Cys75, Cys30–Cys72, and Cys101–Cys175. The MACPF domain occupies 26-374 (TRSECKQKHK…HYIMSRARWQ (349 aa)). A beta stranded transmembrane segment spans residues 128–148 (WRVGLDVNPRPEANMRASVAG). N-linked (GlcNAc...) asparagine glycosylation is present at Asn204. Disulfide bonds link Cys241–Cys407, Cys376–Cys392, Cys380–Cys394, and Cys396–Cys406. The beta stranded transmembrane segment at 256–278 (CLNVEAQVSIGAQASVSSEYKAC) threads the bilayer. Asn375 carries an N-linked (GlcNAc...) asparagine glycan. Positions 375–407 (NCSRPCRSGQHKSSHDSCQCECQDSKVTNQDCC) constitute an EGF-like domain. A C2 domain is found at 395–513 (ECQDSKVTNQ…FHEVTCELNH (119 aa)). 14 residues coordinate Ca(2+): Gly428, Asp429, Thr432, Ala433, Asp435, Asn454, Glu467, Asp483, Ala484, Asp485, Trp488, Asp489, Asp490, and Asp491. 2 disulfides stabilise this stretch: Cys496–Cys509 and Cys524–Cys533. Asn548 carries N-linked (GlcNAc...) asparagine glycosylation.

Belongs to the complement C6/C7/C8/C9 family. In terms of assembly, monomer, as soluble protein. Homooligomer; homooligomerizes to form a pore-forming ring. Ca(2+) serves as cofactor. In terms of processing, N-glycosylated. The glycosylation sites are facing the interior of the pore. As to expression, detected in cytotoxic T-lymphocytes and natural killer cells.

It localises to the cytolytic granule. It is found in the secreted. The protein localises to the cell membrane. Its subcellular location is the endosome lumen. Its function is as follows. Pore-forming protein that plays a key role in granzyme-mediated programmed cell death, and in defense against virus-infected or neoplastic cells. Can insert into the membrane of target cells in its calcium-bound form, oligomerize and form large pores. Promotes cytolysis and apoptosis of target cells by mediating the passage and uptake of cytotoxic granzymes. Facilitates the delivery of cationic cargo protein, while anionic or neural proteins are not delivered efficiently. Perforin pores allow the release of mature caspase-7 (CASP7) into the extracellular milieu. The polypeptide is Perforin-1 (Prf1) (Mus musculus (Mouse)).